Reading from the N-terminus, the 565-residue chain is Maturase K (565 aa).

Belongs to the intron maturase 2 family. MatK subfamily.

It localises to the plastid. The protein localises to the chloroplast. Usually encoded in the trnK tRNA gene intron. Probably assists in splicing its own and other chloroplast group II introns. In Staurastrum punctulatum (Green alga), this protein is Maturase K.